The sequence spans 48 residues: Light-harvesting protein B-870 beta chain (48 aa).

At 2 to 21 the chain is on the cytoplasmic side; it reads AERKGSISGLTDDEAQEFHK. His20 and His38 together coordinate a bacteriochlorophyll. Residues 22–44 traverse the membrane as a helical segment; that stretch reads FWVQGFVGFTAVAVVAHFLVWVW. Topologically, residues 45–48 are periplasmic; sequence RPWL.

As to quaternary structure, an alpha/beta heterodimer. The core complex is formed by different alpha and beta chains, binding bacteriochlorophyll molecules, and arranged most probably in tetrameric structures disposed around the reaction center. The non-pigmented gamma chains may constitute additional components.

The protein resides in the cell inner membrane. Functionally, antenna complexes are light-harvesting systems, which transfer the excitation energy to the reaction centers. The polypeptide is Light-harvesting protein B-870 beta chain (pufB) (Rubrivivax gelatinosus (Rhodocyclus gelatinosus)).